A 24-amino-acid polypeptide reads, in one-letter code: Hemocyanin subunit 4e (24 aa).

This sequence belongs to the tyrosinase family. Hemocyanin subfamily. In terms of tissue distribution, hemolymph.

The protein resides in the secreted. Its subcellular location is the extracellular space. Hemocyanins are copper-containing oxygen carriers occurring freely dissolved in the hemolymph of many mollusks and arthropods. The chain is Hemocyanin subunit 4e from Maja squinado (Mediterranean spider crab).